A 186-amino-acid chain; its full sequence is Transcription factor FapR (186 aa).

It belongs to the FapR family.

Transcriptional factor involved in regulation of membrane lipid biosynthesis by repressing genes involved in fatty acid and phospholipid metabolism. This chain is Transcription factor FapR, found in Staphylococcus epidermidis (strain ATCC 35984 / DSM 28319 / BCRC 17069 / CCUG 31568 / BM 3577 / RP62A).